The sequence spans 565 residues: Mitochondrial distribution and morphology protein 34 (565 aa).

Positions 1-208 (MAFNFNWSPL…VPEYRDRESE (208 aa)) constitute an SMP-LTD domain. Over residues 209–220 (SVNTLDLSSESG) the composition is skewed to polar residues. Disordered stretches follow at residues 209–241 (SVNTLDLSSESGPGQDPLASPPQDPVDASGNAL), 347–463 (FGSY…SRSA), and 533–565 (MQEQKIDPSGSRPFPDFWDDHSREEIPPPAYGH). Residues 353–367 (PGRHSRSHTKKRKKR) are compositionally biased toward basic residues. Positions 368–378 (VVDLRRPKTTD) are enriched in basic and acidic residues. Over residues 382–391 (SVSGDSVFSS) the composition is skewed to low complexity. 2 stretches are compositionally biased toward polar residues: residues 392–402 (ENATSAPTIFS) and 439–463 (QGDQTLRRSNLSMSEAAQPSSSRSA).

This sequence belongs to the MDM34 family. In terms of assembly, component of the ER-mitochondria encounter structure (ERMES) or MDM complex, composed of mmm1, mdm10, mdm12 and mdm34.

It is found in the mitochondrion outer membrane. Its function is as follows. Component of the ERMES/MDM complex, which serves as a molecular tether to connect the endoplasmic reticulum (ER) and mitochondria. Components of this complex are involved in the control of mitochondrial shape and protein biogenesis, and function in nonvesicular lipid trafficking between the ER and mitochondria. Mdm34 is required for the interaction of the ER-resident membrane protein mmm1 and the outer mitochondrial membrane-resident beta-barrel protein mdm10. In Talaromyces marneffei (strain ATCC 18224 / CBS 334.59 / QM 7333) (Penicillium marneffei), this protein is Mitochondrial distribution and morphology protein 34.